The following is an 86-amino-acid chain: uncharacterized protein (86 aa).

It to M.jannaschii MJ1173.

This is an uncharacterized protein from Methanosarcina mazei (strain ATCC BAA-159 / DSM 3647 / Goe1 / Go1 / JCM 11833 / OCM 88) (Methanosarcina frisia).